We begin with the raw amino-acid sequence, 409 residues long: Peptidase T (409 aa).

His-78 lines the Zn(2+) pocket. Asp-80 is an active-site residue. Asp-140 contributes to the Zn(2+) binding site. Glu-174 (proton acceptor) is an active-site residue. Residues Glu-175, Asp-197, and His-379 each contribute to the Zn(2+) site.

This sequence belongs to the peptidase M20B family. Zn(2+) is required as a cofactor.

Its subcellular location is the cytoplasm. It catalyses the reaction Release of the N-terminal residue from a tripeptide.. Its function is as follows. Cleaves the N-terminal amino acid of tripeptides. The polypeptide is Peptidase T (Aliivibrio fischeri (strain ATCC 700601 / ES114) (Vibrio fischeri)).